Reading from the N-terminus, the 336-residue chain is L-rhamnono-gamma-lactonase (336 aa).

This sequence belongs to the metallo-dependent hydrolases superfamily. It depends on a divalent metal cation as a cofactor.

It carries out the reaction L-rhamnono-1,4-lactone + H2O = L-rhamnonate + H(+). With respect to regulation, inhibited by Zn(2+), Fe(2+) and Cu(2+), but not by EDTA. In terms of biological role, hydrolase with high substrate specificity for L-rhamnono-1,4-lactone. Catalyzes the second step in an alternative pathway for rhamnose utilization that does not involve phosphorylated intermediates. In Scheffersomyces stipitis (strain ATCC 58785 / CBS 6054 / NBRC 10063 / NRRL Y-11545) (Yeast), this protein is L-rhamnono-gamma-lactonase (LRA2).